The sequence spans 197 residues: Adenylate kinase (197 aa).

12–17 (GSGKTT) provides a ligand contact to ATP. Residues 34 to 63 (STGDMLREEVASGSELGKTIESYIAKGALV) are NMP. AMP is bound by residues Thr-35, Arg-40, 61 to 63 (ALV), 88 to 91 (GYPR), and Gln-95. The tract at residues 130-144 (GRRAEAAPGEERSDD) is LID. Residue Arg-131 participates in ATP binding. AMP-binding residues include Arg-141 and Arg-152. Residue Arg-180 participates in ATP binding.

The protein belongs to the adenylate kinase family. As to quaternary structure, monomer.

Its subcellular location is the cytoplasm. The catalysed reaction is AMP + ATP = 2 ADP. It participates in purine metabolism; AMP biosynthesis via salvage pathway; AMP from ADP: step 1/1. Functionally, catalyzes the reversible transfer of the terminal phosphate group between ATP and AMP. Plays an important role in cellular energy homeostasis and in adenine nucleotide metabolism. In Sulfurovum sp. (strain NBC37-1), this protein is Adenylate kinase.